The sequence spans 105 residues: Diuretic hormone class 2 (105 aa).

Residues Met-1 to Ala-23 form the signal peptide. Positions Ile-24 to Ser-63 are excised as a propeptide. The residue at position 96 (Pro-96) is a Proline amide. Positions Arg-101–Ala-105 are excised as a propeptide.

As to expression, expressed in central brain, antennal lobes, retrocerebral complex and gnathal, thoracic and abdominal ganglia but not in optical lobes (at protein level).

The protein resides in the secreted. Functionally, regulation of fluid secretion. Stimulates Malpighian tubules fluid secretion. This is Diuretic hormone class 2 from Camponotus floridanus (Florida carpenter ant).